A 341-amino-acid polypeptide reads, in one-letter code: MLQVVQSPHNLVFMGSIRSVVACLSLAAVARKMTAATGQSVSGTSAAAAGLLRLTSVPGYDHNRVNDVLLLRPAAETQRRCDNETQNLQDGNDHVVFFPGDIQNFQQEMALQPDAAPWQCWSLERVGLTLAHRFPGCHIWVIRASQMYLHKFSCYQNFVESNLFGAPEHSADYGAIRHLRALLGHSMQQAGLPNPLPPLSGTSTPGPLPAGFSLTIVGFSKGCVVLNQIVYELAGARADPELQLFLDRVSALYWLDGGHPGGSETWVTDKCALGELASSGVAVHAHVTPYEVRDPMRAWVGREHRHFIKTLEDLGARVSHKLHFEDEPASIDNHFRVIQEF.

The transit peptide at M1 to A35 directs the protein to the mitochondrion.

It belongs to the C2orf69 family.

It localises to the mitochondrion matrix. May play a role in the respiratory chain. The sequence is that of Mitochondrial protein C2orf69 homolog from Danio rerio (Zebrafish).